Here is a 395-residue protein sequence, read N- to C-terminus: Forkhead box protein I3 (395 aa).

A DNA-binding region (fork-head) is located at residues 131–225 (RPPYSYSALI…DNGNFRRKRK (95 aa)). Disordered regions lie at residues 216–288 (DNGN…GIIS) and 322–370 (RNFS…SSGS). The Nuclear localization signal motif lies at 221–227 (RRKRKRR). A compositionally biased stretch (low complexity) spans 234–245 (ATTAAASSLGGL). The segment covering 325–335 (SAGQLSGGTFT) has biased composition (polar residues). Positions 336-349 (PSSSSSQEVPSPEQ) are enriched in low complexity.

As to expression, initially expressed in the pre-placodal ectoderm surrounding the neural plate, which will give rise to all craniofacial sensory organs. Expression then becomes restricted to a region immediately anterior to the first pair of somites that will give rise to the otic and epibranchial placodes, before becoming down-regulated from this region and restricted to the ectoderm and endoderm of the pharyngeal arches.

Its subcellular location is the nucleus. In terms of biological role, transcription factor required for pharyngeal arch development, which is involved in otic placode development. The polypeptide is Forkhead box protein I3 (Gallus gallus (Chicken)).